The sequence spans 72 residues: uncharacterized protein (72 aa).

Positions 51–72 (AKGGRQRGETVVVDDQCKEHKE) are disordered.

Belongs to the YiiE family.

This is an uncharacterized protein from Escherichia coli O6:K15:H31 (strain 536 / UPEC).